The primary structure comprises 158 residues: SsrA-binding protein (158 aa).

The protein belongs to the SmpB family.

The protein resides in the cytoplasm. Required for rescue of stalled ribosomes mediated by trans-translation. Binds to transfer-messenger RNA (tmRNA), required for stable association of tmRNA with ribosomes. tmRNA and SmpB together mimic tRNA shape, replacing the anticodon stem-loop with SmpB. tmRNA is encoded by the ssrA gene; the 2 termini fold to resemble tRNA(Ala) and it encodes a 'tag peptide', a short internal open reading frame. During trans-translation Ala-aminoacylated tmRNA acts like a tRNA, entering the A-site of stalled ribosomes, displacing the stalled mRNA. The ribosome then switches to translate the ORF on the tmRNA; the nascent peptide is terminated with the 'tag peptide' encoded by the tmRNA and targeted for degradation. The ribosome is freed to recommence translation, which seems to be the essential function of trans-translation. The polypeptide is SsrA-binding protein (Saccharopolyspora erythraea (strain ATCC 11635 / DSM 40517 / JCM 4748 / NBRC 13426 / NCIMB 8594 / NRRL 2338)).